The sequence spans 223 residues: Deoxyribose-phosphate aldolase (223 aa).

Asp-89 serves as the catalytic Proton donor/acceptor. Residue Lys-154 is the Schiff-base intermediate with acetaldehyde of the active site. Residue Lys-183 is the Proton donor/acceptor of the active site.

Belongs to the DeoC/FbaB aldolase family. DeoC type 1 subfamily.

Its subcellular location is the cytoplasm. It carries out the reaction 2-deoxy-D-ribose 5-phosphate = D-glyceraldehyde 3-phosphate + acetaldehyde. It functions in the pathway carbohydrate degradation; 2-deoxy-D-ribose 1-phosphate degradation; D-glyceraldehyde 3-phosphate and acetaldehyde from 2-deoxy-alpha-D-ribose 1-phosphate: step 2/2. Catalyzes a reversible aldol reaction between acetaldehyde and D-glyceraldehyde 3-phosphate to generate 2-deoxy-D-ribose 5-phosphate. The protein is Deoxyribose-phosphate aldolase of Thermoanaerobacter sp. (strain X514).